The primary structure comprises 1393 residues: DNA-directed RNA polymerase subunit beta'' (1393 aa).

The Zn(2+) site is built by C220, C291, C298, and C301.

Belongs to the RNA polymerase beta' chain family. RpoC2 subfamily. As to quaternary structure, in plastids the minimal PEP RNA polymerase catalytic core is composed of four subunits: alpha, beta, beta', and beta''. When a (nuclear-encoded) sigma factor is associated with the core the holoenzyme is formed, which can initiate transcription. It depends on Zn(2+) as a cofactor.

Its subcellular location is the plastid. It is found in the chloroplast. The enzyme catalyses RNA(n) + a ribonucleoside 5'-triphosphate = RNA(n+1) + diphosphate. DNA-dependent RNA polymerase catalyzes the transcription of DNA into RNA using the four ribonucleoside triphosphates as substrates. This is DNA-directed RNA polymerase subunit beta'' from Gossypium hirsutum (Upland cotton).